The primary structure comprises 208 residues: Cytochrome c oxidase assembly protein CtaG (208 aa).

Residues 1-19 are Cytoplasmic-facing; sequence MSPPLPQAPQQPAPRRGLG. A helical; Signal-anchor for type II membrane protein membrane pass occupies residues 20–42; sequence HDTAVAAVCGLVVALMVGASFAA. Over 43–208 the chain is Periplasmic; it reads VPFYNWFCRT…SEPAPRKGNL (166 aa).

Belongs to the COX11/CtaG family.

It localises to the cell inner membrane. Exerts its effect at some terminal stage of cytochrome c oxidase synthesis, probably by being involved in the insertion of the copper B into subunit I. This Rhodopseudomonas palustris (strain TIE-1) protein is Cytochrome c oxidase assembly protein CtaG.